The primary structure comprises 601 residues: Kelch-like ECH-associated protein 1A (601 aa).

One can recognise a BTB domain in the interval 44–117; it reads MDELRHHEML…VISRLIDFAY (74 aa). Residues 153-253 form the BACK domain; that stretch reads KNLEPSNVIG…LNAVHIYALP (101 aa). Kelch repeat units lie at residues 292–337, 338–388, 389–435, 436–482, 484–529, and 530–576; these read PTPH…PCSG, LGAC…PRNR, VGVG…ARLG, AGVA…VRSG, GVVC…CRSA, and HGVS…GRSG.

It belongs to the KEAP1 family. Homodimer and heterodimer; heterodimerizes with keap1b. Component of the BCR(KEAP1) E3 ubiquitin ligase complex, at least composed of 2 molecules of cul3, 2 molecules of keap1 (keap1a and/or keap1b), and rbx1. Interacts with nfe2l2/nrf2; the interaction is direct. Non-enzymatic covalent modifications of reactive cysteines by electrophile metabolites inactivate the BCR(KEAP1) complex. Widely expressed.

It localises to the cytoplasm. Its subcellular location is the nucleus. The protein operates within protein modification; protein ubiquitination. With respect to regulation, ubiquitin ligase activity of the BCR(KEAP1) complex is inhibited by oxidative stress and electrophile metabolites such as sulforaphane. Electrophile metabolites react with reactive cysteine residues in keap1 and trigger non-enzymatic covalent modifications of these cysteine residues, leading to inactivate the ubiquitin ligase activity of the BCR(KEAP1) complex. Substrate-specific adapter of a BCR (BTB-CUL3-RBX1) E3 ubiquitin ligase complex that regulates the response to oxidative stress by targeting nfe2l2/nrf2 for ubiquitination. Keap1 acts as a key sensor of oxidative and electrophilic stress: in normal conditions, the BCR(KEAP1) complex mediates ubiquitination and degradation of nfe2l2/nrf2, a transcription factor regulating expression of many cytoprotective genes. In response to oxidative stress, different electrophile metabolites trigger non-enzymatic covalent modifications of highly reactive cysteine residues in KEAP1, leading to inactivate the ubiquitin ligase activity of the BCR(KEAP1) complex, promoting nfe2l2/nrf2 nuclear accumulation and expression of phase II detoxifying enzymes. In Danio rerio (Zebrafish), this protein is Kelch-like ECH-associated protein 1A.